A 729-amino-acid chain; its full sequence is Elongation factor 2 (729 aa).

One can recognise a tr-type G domain in the interval 19-262 (EQIRNIAIAA…MVCEHFPNPI (244 aa)). Residues 28-35 (AHVDHGKT), 94-98 (DTPGH), and 148-151 (NKVD) each bind GTP. At H597 the chain carries Diphthamide.

Belongs to the TRAFAC class translation factor GTPase superfamily. Classic translation factor GTPase family. EF-G/EF-2 subfamily.

It is found in the cytoplasm. Its function is as follows. Catalyzes the GTP-dependent ribosomal translocation step during translation elongation. During this step, the ribosome changes from the pre-translocational (PRE) to the post-translocational (POST) state as the newly formed A-site-bound peptidyl-tRNA and P-site-bound deacylated tRNA move to the P and E sites, respectively. Catalyzes the coordinated movement of the two tRNA molecules, the mRNA and conformational changes in the ribosome. This is Elongation factor 2 from Halomicrobium mukohataei (strain ATCC 700874 / DSM 12286 / JCM 9738 / NCIMB 13541) (Haloarcula mukohataei).